An 87-amino-acid polypeptide reads, in one-letter code: Mitochondrial import inner membrane translocase subunit TIM9 (87 aa).

Residue methionine 1 is modified to N-acetylmethionine. The Twin CX3C motif motif lies at 35-59 (CFTDCVNDFTTSKLTNKEQTCIMKC). Intrachain disulfides connect cysteine 35-cysteine 59 and cysteine 39-cysteine 55.

It belongs to the small Tim family. As to quaternary structure, heterohexamer; composed of 3 copies of TIM9 and 3 copies of TIM10, named soluble 70 kDa complex. Associates with the TIM12 component of the TIM22 complex, whose core is composed of TIM18, TIM22 and TIM54. Interacts with the transmembrane regions of multi-pass transmembrane proteins in transit.

The protein localises to the mitochondrion inner membrane. It localises to the mitochondrion intermembrane space. Mitochondrial intermembrane chaperone that participates in the import and insertion of multi-pass transmembrane proteins into the mitochondrial inner membrane. Also required for the transfer of beta-barrel precursors from the TOM complex to the sorting and assembly machinery (SAM complex) of the outer membrane. Acts as a chaperone-like protein that protects the hydrophobic precursors from aggregation and guide them through the mitochondrial intermembrane space. Compared to TIM10, it may have a strong structural role. This chain is Mitochondrial import inner membrane translocase subunit TIM9 (TIM9), found in Saccharomyces cerevisiae (strain ATCC 204508 / S288c) (Baker's yeast).